We begin with the raw amino-acid sequence, 106 residues long: Insulin-2 (106 aa).

A signal peptide spans 1 to 23 (MALWMQCLPLVLVLLFSTPNTEA). Disulfide bonds link C30-C92, C42-C105, and C91-C96. Positions 56 to 83 (DIEQAQVNGPQDNELDGMQFQPQEYQKM) are cleaved as a propeptide — c peptide.

It belongs to the insulin family. Heterodimer of a B chain and an A chain linked by two disulfide bonds.

The protein localises to the secreted. Its function is as follows. Insulin decreases blood glucose concentration. It increases cell permeability to monosaccharides, amino acids and fatty acids. It accelerates glycolysis, the pentose phosphate cycle, and glycogen synthesis in liver. The polypeptide is Insulin-2 (ins-b) (Xenopus laevis (African clawed frog)).